We begin with the raw amino-acid sequence, 512 residues long: Histidine ammonia-lyase (512 aa).

Residues C143 to G145 constitute a cross-link (5-imidazolinone (Cys-Gly)). Position 144 is a 2,3-didehydroalanine (Ser) (S144).

Belongs to the PAL/histidase family. Post-translationally, contains an active site 4-methylidene-imidazol-5-one (MIO), which is formed autocatalytically by cyclization and dehydration of residues Cys-Ser-Gly.

The protein localises to the cytoplasm. The enzyme catalyses L-histidine = trans-urocanate + NH4(+). It participates in amino-acid degradation; L-histidine degradation into L-glutamate; N-formimidoyl-L-glutamate from L-histidine: step 1/3. The polypeptide is Histidine ammonia-lyase (Streptomyces coelicolor (strain ATCC BAA-471 / A3(2) / M145)).